The following is a 423-amino-acid chain: Serine hydroxymethyltransferase (423 aa).

Residues leucine 118 and 122–124 (GHL) each bind (6S)-5,6,7,8-tetrahydrofolate. Lysine 227 bears the N6-(pyridoxal phosphate)lysine mark. Position 351-353 (351-353 (SPF)) interacts with (6S)-5,6,7,8-tetrahydrofolate.

It belongs to the SHMT family. Homodimer. The cofactor is pyridoxal 5'-phosphate.

The protein localises to the cytoplasm. The enzyme catalyses (6R)-5,10-methylene-5,6,7,8-tetrahydrofolate + glycine + H2O = (6S)-5,6,7,8-tetrahydrofolate + L-serine. It functions in the pathway one-carbon metabolism; tetrahydrofolate interconversion. The protein operates within amino-acid biosynthesis; glycine biosynthesis; glycine from L-serine: step 1/1. Catalyzes the reversible interconversion of serine and glycine with tetrahydrofolate (THF) serving as the one-carbon carrier. This reaction serves as the major source of one-carbon groups required for the biosynthesis of purines, thymidylate, methionine, and other important biomolecules. Also exhibits THF-independent aldolase activity toward beta-hydroxyamino acids, producing glycine and aldehydes, via a retro-aldol mechanism. In Petrotoga mobilis (strain DSM 10674 / SJ95), this protein is Serine hydroxymethyltransferase.